The primary structure comprises 371 residues: 4-hydroxy-3-methylbut-2-en-1-yl diphosphate synthase (flavodoxin) (371 aa).

[4Fe-4S] cluster is bound by residues C270, C273, C305, and E312.

Belongs to the IspG family. [4Fe-4S] cluster is required as a cofactor.

It catalyses the reaction (2E)-4-hydroxy-3-methylbut-2-enyl diphosphate + oxidized [flavodoxin] + H2O + 2 H(+) = 2-C-methyl-D-erythritol 2,4-cyclic diphosphate + reduced [flavodoxin]. It functions in the pathway isoprenoid biosynthesis; isopentenyl diphosphate biosynthesis via DXP pathway; isopentenyl diphosphate from 1-deoxy-D-xylulose 5-phosphate: step 5/6. Converts 2C-methyl-D-erythritol 2,4-cyclodiphosphate (ME-2,4cPP) into 1-hydroxy-2-methyl-2-(E)-butenyl 4-diphosphate. The chain is 4-hydroxy-3-methylbut-2-en-1-yl diphosphate synthase (flavodoxin) from Shewanella denitrificans (strain OS217 / ATCC BAA-1090 / DSM 15013).